We begin with the raw amino-acid sequence, 157 residues long: MSSAVETVTKLVTPILEEQNFELVEVEFVKEGKNWFLRVFIDKEGGIDIEECAFVSEKLSEKLDAMDPDPIPQAYFLEVSSPGAERPLKKESDYEQAVGKYIHISLYQAVDGEKQIEGTLVHLDSEQLTLSVKIKTRVKEMTFERKNIAKARLAIQF.

Belongs to the RimP family.

It is found in the cytoplasm. In terms of biological role, required for maturation of 30S ribosomal subunits. This is Ribosome maturation factor RimP from Enterococcus faecalis (strain ATCC 700802 / V583).